Here is a 506-residue protein sequence, read N- to C-terminus: NAD(P)H-quinone oxidoreductase subunit 2 (506 aa).

A run of 13 helical transmembrane segments spans residues 14-34 (AIIPEAFILLGIVGTLLVDLA), 42-62 (WAPSICYLSIGSSLLSLTLQW), 79-99 (LAIAFRAIIALSTLVSLLISW), 108-128 (PIGEFAAIVLSATLGAMLLCG), 132-152 (LISVFISLETLSVASYLLSGY), 167-187 (LLVGSAAAAVYLYGSSFLYGL), 206-226 (FITSLALVFVLSTVAFKIAAV), 240-260 (PTPVVAFLSVGSKTAGFAFAI), 276-296 (LLFTILAILSMALGNVVALAQ), 302-322 (MLAYSSIGQAGFVMIGIVSGT), 330-350 (VLYLAAYLFMNLGAFSCVILF), 374-394 (LGLSLCLLSLGGLPPMLGFFG), and 409-429 (LLVIVGLVTSVISIYYYISVI).

Belongs to the complex I subunit 2 family. In terms of assembly, NDH-1 can be composed of about 15 different subunits; different subcomplexes with different compositions have been identified which probably have different functions.

The protein localises to the cellular thylakoid membrane. The catalysed reaction is a plastoquinone + NADH + (n+1) H(+)(in) = a plastoquinol + NAD(+) + n H(+)(out). The enzyme catalyses a plastoquinone + NADPH + (n+1) H(+)(in) = a plastoquinol + NADP(+) + n H(+)(out). NDH-1 shuttles electrons from an unknown electron donor, via FMN and iron-sulfur (Fe-S) centers, to quinones in the respiratory and/or the photosynthetic chain. The immediate electron acceptor for the enzyme in this species is believed to be plastoquinone. Couples the redox reaction to proton translocation, and thus conserves the redox energy in a proton gradient. Cyanobacterial NDH-1 also plays a role in inorganic carbon-concentration. The chain is NAD(P)H-quinone oxidoreductase subunit 2 from Prochlorococcus marinus (strain MIT 9301).